We begin with the raw amino-acid sequence, 1066 residues long: UPF0182 protein BL1029 (1066 aa).

Residues 12-74 (GNGGDSRRNN…KPASGGSGGS (63 aa)) form a disordered region. A compositionally biased stretch (low complexity) spans 44–61 (NAGPSGSSRPPRGPANPR). 7 helical membrane passes run 77–97 (SKILIGVVLALAIIVGLFFGL), 126–146 (LWVAYALLMALTGFVSAWLAI), 179–199 (VAVVISLIVGVIFGSQFNANW), 235–255 (VLAAVAMLLGVGLVFSVVTHV), 282–302 (LGIWLMLNMFAWAVRQMIGVF), 326–346 (VTFIMAALTAILGVVLGIWLM), and 372–392 (VTSIAVVVVVGLVLTVAWPVL). Residues 977–1044 (DSGAAAGDAE…SQSAMKNGDW (68 aa)) form a disordered region. Positions 989–998 (SGDQSGSDTN) are enriched in polar residues. Residues 1003–1016 (GTTDGKSDSGSSSD) are compositionally biased toward low complexity.

Belongs to the UPF0182 family.

The protein resides in the cell membrane. The sequence is that of UPF0182 protein BL1029 from Bifidobacterium longum (strain NCC 2705).